We begin with the raw amino-acid sequence, 182 residues long: Oligoribonuclease (182 aa).

An Exonuclease domain is found at L8–L171. The active site involves Y129.

The protein belongs to the oligoribonuclease family.

Its subcellular location is the cytoplasm. In terms of biological role, 3'-to-5' exoribonuclease specific for small oligoribonucleotides. The sequence is that of Oligoribonuclease from Haemophilus influenzae (strain 86-028NP).